Here is a 283-residue protein sequence, read N- to C-terminus: Bifunctional protein FolD (283 aa).

NADP(+) is bound by residues 166 to 168 (GRS) and serine 191.

This sequence belongs to the tetrahydrofolate dehydrogenase/cyclohydrolase family. Homodimer.

The catalysed reaction is (6R)-5,10-methylene-5,6,7,8-tetrahydrofolate + NADP(+) = (6R)-5,10-methenyltetrahydrofolate + NADPH. The enzyme catalyses (6R)-5,10-methenyltetrahydrofolate + H2O = (6R)-10-formyltetrahydrofolate + H(+). It functions in the pathway one-carbon metabolism; tetrahydrofolate interconversion. Catalyzes the oxidation of 5,10-methylenetetrahydrofolate to 5,10-methenyltetrahydrofolate and then the hydrolysis of 5,10-methenyltetrahydrofolate to 10-formyltetrahydrofolate. The polypeptide is Bifunctional protein FolD (Pediococcus pentosaceus (strain ATCC 25745 / CCUG 21536 / LMG 10740 / 183-1w)).